The sequence spans 400 residues: 3-phenylpropionate/cinnamic acid dioxygenase ferredoxin--NAD(+) reductase component (400 aa).

5-36 lines the FAD pocket; that stretch reads TIIIVGGGQAAAMAAASLRQQGFTGELHLFSD. 146 to 174 is an NAD(+) binding site; sequence SVVIVGAGTIGLELAASATQRRCKVTVIE.

Belongs to the bacterial ring-hydroxylating dioxygenase ferredoxin reductase family. This dioxygenase system consists of four proteins: the two subunits of the hydroxylase component (HcaE and HcaF), a ferredoxin (HcaC) and a ferredoxin reductase (HcaD). FAD is required as a cofactor.

The enzyme catalyses 2 reduced [2Fe-2S]-[ferredoxin] + NAD(+) + H(+) = 2 oxidized [2Fe-2S]-[ferredoxin] + NADH. The protein operates within aromatic compound metabolism; 3-phenylpropanoate degradation. In terms of biological role, part of the multicomponent 3-phenylpropionate dioxygenase, that converts 3-phenylpropionic acid (PP) and cinnamic acid (CI) into 3-phenylpropionate-dihydrodiol (PP-dihydrodiol) and cinnamic acid-dihydrodiol (CI-dihydrodiol), respectively. In Escherichia coli (strain 55989 / EAEC), this protein is 3-phenylpropionate/cinnamic acid dioxygenase ferredoxin--NAD(+) reductase component.